A 693-amino-acid chain; its full sequence is Elongation factor G (693 aa).

Residues 8-282 (EKTRNIGIMA…AVIDYLPSPL (275 aa)) form the tr-type G domain. Residues 17–24 (AHVDAGKT), 81–85 (DTPGH), and 135–138 (NKMD) each bind GTP.

It belongs to the TRAFAC class translation factor GTPase superfamily. Classic translation factor GTPase family. EF-G/EF-2 subfamily.

The protein localises to the cytoplasm. Functionally, catalyzes the GTP-dependent ribosomal translocation step during translation elongation. During this step, the ribosome changes from the pre-translocational (PRE) to the post-translocational (POST) state as the newly formed A-site-bound peptidyl-tRNA and P-site-bound deacylated tRNA move to the P and E sites, respectively. Catalyzes the coordinated movement of the two tRNA molecules, the mRNA and conformational changes in the ribosome. This is Elongation factor G from Streptococcus pneumoniae (strain CGSP14).